The sequence spans 462 residues: cAMP-dependent protein kinase regulatory subunit (462 aa).

Positions 54-203 (TPSPRFPPSP…RLKYAIEGNF (150 aa)) are dimerization and phosphorylation. The interval 79 to 157 (FGANANPFGG…PTTDSYPAQY (79 aa)) is disordered. The span at 80 to 102 (GANANPFGGSSSNPNPFGGSASP) shows a compositional bias: low complexity. The residue at position 164 (Ser-164) is a Phosphoserine. Residues 204-333 (LFSH…FLEE), Glu-282, Arg-291, 336-453 (ILSS…KTGV), Glu-401, and Arg-410 each bind 3',5'-cyclic AMP.

This sequence belongs to the cAMP-dependent kinase regulatory chain family. As to quaternary structure, tetramer, composed of 2 regulatory (R) and 2 catalytic (C) subunits. In the presence of cAMP it dissociates into 2 active monomeric C subunits and an R dimer.

The protein is cAMP-dependent protein kinase regulatory subunit (pkar1) of Hypocrea atroviridis (Trichoderma atroviride).